The chain runs to 464 residues: MSRTETDSIGPIEVPEDAYWGAQTQRSLINFAIGDQRMPLAVLHALTLIKKAAARVNDRNGDLPADIARLIEQAADEVLDGQHDAQFPLVVWQTGSGTQSNMNVNEVIAGRANELAGQGRGGKSPVHPNDHVNRSQSSNDCFPTAMHIATAQAVKEQLLPAIAELSSGLAEQAARHMKLVKTGRTHMMDATPITFGQELSGFVAQLDYAEKAIRAALPAVYELAQGGTAVGTGLNAPKGFAEAIAAELAALSGLPFVTAPNKFAALAGHEPLAALSGALKTLAGTLMKIANDLRLLGSGPRAGLAEVRLPANEPGSSIMPGKVNPTQCEALSMLACQVMGNDVTIGFAASQGHLQLNVYKPVIIHNVLQSIRLLADGCSNFNEHCVAGMEPDAEKMAEHLERGLMLVTALNPHIGYDKSAHIAKKAYTEGLTLREAALALGYLTDEEFDAWVRPDKMLEAGSNG.

Substrate is bound by residues 96 to 98 (SGT), 127 to 130 (HPND), 137 to 139 (SSN), and threonine 185. The active-site Proton donor/acceptor is the histidine 186. Serine 316 is an active-site residue. Residues serine 317 and 322–324 (KVN) each bind substrate.

It belongs to the class-II fumarase/aspartase family. Fumarase subfamily. In terms of assembly, homotetramer.

The protein resides in the cytoplasm. The enzyme catalyses (S)-malate = fumarate + H2O. The protein operates within carbohydrate metabolism; tricarboxylic acid cycle; (S)-malate from fumarate: step 1/1. Functionally, involved in the TCA cycle. Catalyzes the stereospecific interconversion of fumarate to L-malate. This chain is Fumarate hydratase class II, found in Pseudomonas syringae pv. tomato (strain ATCC BAA-871 / DC3000).